The chain runs to 277 residues: Large ribosomal subunit protein uL2 (277 aa).

The interval 219-277 (TVRGSVMNPNDHPHGGGEGRSPIGHPSPRTPWGKPALGYKTRKNKKYSDRFIVKRRHDK) is disordered.

Belongs to the universal ribosomal protein uL2 family. In terms of assembly, part of the 50S ribosomal subunit. Forms a bridge to the 30S subunit in the 70S ribosome.

One of the primary rRNA binding proteins. Required for association of the 30S and 50S subunits to form the 70S ribosome, for tRNA binding and peptide bond formation. It has been suggested to have peptidyltransferase activity; this is somewhat controversial. Makes several contacts with the 16S rRNA in the 70S ribosome. This is Large ribosomal subunit protein uL2 from Clostridium botulinum (strain 657 / Type Ba4).